A 280-amino-acid chain; its full sequence is Adenosylcobinamide-GDP ribazoletransferase (280 aa).

The next 6 helical transmembrane spans lie at 44 to 64, 69 to 89, 111 to 131, 135 to 155, 189 to 209, and 226 to 246; these read GVGVLVGALVAAFTALLLFVL, STPLVAAALGTALGVLLTGAF, LVIMKDSRVGAFGAIAVMLAL, VALLALLGAVSATLMVAALFV, ISVAALLTGFIWCFMALALVI, and ALLQALLSAVVASCVAWAVMA.

The protein belongs to the CobS family. The cofactor is Mg(2+).

It localises to the cell inner membrane. It carries out the reaction alpha-ribazole + adenosylcob(III)inamide-GDP = adenosylcob(III)alamin + GMP + H(+). The enzyme catalyses alpha-ribazole 5'-phosphate + adenosylcob(III)inamide-GDP = adenosylcob(III)alamin 5'-phosphate + GMP + H(+). It functions in the pathway cofactor biosynthesis; adenosylcobalamin biosynthesis; adenosylcobalamin from cob(II)yrinate a,c-diamide: step 7/7. Its function is as follows. Joins adenosylcobinamide-GDP and alpha-ribazole to generate adenosylcobalamin (Ado-cobalamin). Also synthesizes adenosylcobalamin 5'-phosphate from adenosylcobinamide-GDP and alpha-ribazole 5'-phosphate. In Albidiferax ferrireducens (strain ATCC BAA-621 / DSM 15236 / T118) (Rhodoferax ferrireducens), this protein is Adenosylcobinamide-GDP ribazoletransferase.